The primary structure comprises 164 residues: CDP-archaeol synthase (164 aa).

4 consecutive transmembrane segments (helical) span residues 3–23 (LTVF…AVFA), 55–75 (AIGI…YHVI), 77–97 (VFDA…GAFI), and 122–142 (FLVY…AVVI).

The protein belongs to the CDP-archaeol synthase family. Mg(2+) serves as cofactor.

It is found in the cell membrane. It catalyses the reaction 2,3-bis-O-(geranylgeranyl)-sn-glycerol 1-phosphate + CTP + H(+) = CDP-2,3-bis-O-(geranylgeranyl)-sn-glycerol + diphosphate. Its pathway is membrane lipid metabolism; glycerophospholipid metabolism. In terms of biological role, catalyzes the formation of CDP-2,3-bis-(O-geranylgeranyl)-sn-glycerol (CDP-archaeol) from 2,3-bis-(O-geranylgeranyl)-sn-glycerol 1-phosphate (DGGGP) and CTP. This reaction is the third ether-bond-formation step in the biosynthesis of archaeal membrane lipids. In Pyrobaculum aerophilum (strain ATCC 51768 / DSM 7523 / JCM 9630 / CIP 104966 / NBRC 100827 / IM2), this protein is CDP-archaeol synthase.